Here is a 649-residue protein sequence, read N- to C-terminus: Endoplasmic reticulum membrane protein 65 (649 aa).

Residues 1–55 (MGSNTSPGQADPLESENESSLTSRFLPNKRDGGKDNESVIPEKEEPDLNEPVLAV) form a disordered region. Residues 1 to 165 (MGSNTSPGQA…LATPYAIEKT (165 aa)) are Cytoplasmic-facing. Over residues 28–43 (NKRDGGKDNESVIPEK) the composition is skewed to basic and acidic residues. Position 94 is a phosphoserine (Ser94). Residues 166–186 (FLFGWFVSVDSFLYIFTLFPI) form a helical membrane-spanning segment. The Lumenal segment spans residues 187–302 (RVLISFFTLS…NFWNPAGWMT (116 aa)). A glycan (N-linked (GlcNAc...) asparagine) is linked at Asn215. The helical transmembrane segment at 303–323 (FFYYFAISLAYMVLHTLVLLY) threads the bilayer. Over 324–366 (QIITLNVTVNSYSNAVLALLMSNQLVEIKGAVFKKFEKENLFQ) the chain is Cytoplasmic. The chain crosses the membrane as a helical span at residues 367–387 (LTCSDVVERFQITIMVIIIFL). Topologically, residues 388-414 (RNLAELYTTSSLDQPLLTFKRLKTLLA) are lumenal. Residues 415–435 (PFFWVIGSELFVDWLKHAFII) traverse the membrane as a helical segment. Over 436–479 (KFNYIKPSIYSRFTDVLCHDYVASGAQLTQTVTGCSQQVARRMG) the chain is Cytoplasmic. Residues 480–500 (LPVLPLVCVFIRTSMQTWSMF) traverse the membrane as a helical segment. Over 501–557 (RSTHSMKQEIAKSIGTIFPTKDNYVYYLPNKEANTYNAGKEASWETLLLSVVRGKSG) the chain is Lumenal. A helical membrane pass occupies residues 558–578 (IAFLFFMAIMLKLLLGKAILA). The Cytoplasmic segment spans residues 579–649 (ITQSRYESMQ…RYAMHSKRIW (71 aa)).

It belongs to the TAPT1 family. As to quaternary structure, interacts with slp1.

The protein localises to the endoplasmic reticulum membrane. May be involved in membrane protein folding. This Schizosaccharomyces pombe (strain 972 / ATCC 24843) (Fission yeast) protein is Endoplasmic reticulum membrane protein 65.